A 362-amino-acid polypeptide reads, in one-letter code: Nicotinate-nucleotide--dimethylbenzimidazole phosphoribosyltransferase (362 aa).

The active-site Proton acceptor is Glu-321.

The protein belongs to the CobT family.

It carries out the reaction 5,6-dimethylbenzimidazole + nicotinate beta-D-ribonucleotide = alpha-ribazole 5'-phosphate + nicotinate + H(+). The protein operates within nucleoside biosynthesis; alpha-ribazole biosynthesis; alpha-ribazole from 5,6-dimethylbenzimidazole: step 1/2. In terms of biological role, catalyzes the synthesis of alpha-ribazole-5'-phosphate from nicotinate mononucleotide (NAMN) and 5,6-dimethylbenzimidazole (DMB). This is Nicotinate-nucleotide--dimethylbenzimidazole phosphoribosyltransferase from Clostridium tetani (strain Massachusetts / E88).